Reading from the N-terminus, the 352-residue chain is MRYHLSALVLVFTAFRETLTAPTPGNNTIPLPNRLLHQWPNGTWVENISVRPNGNLLVTTSTPDGSVWQVKEPWKENPEVERVFNFDEWVDRLIGIGETQDDKYVVVGSRFYSTDAQSSHVARTFCAMELDFSGNTTEPSARLIAWMPESYLLQGVAALPWDRDTVLISDQYVLRPRAVQIDWTPSPGQIWVLDTRTGEYGLVMTDYAELNTTYAKGPDVGIDGIKIRDHDLFWVNQDDSGIYRVKIDDAGVPVAPVKPQLVASYNTMWDDMAFDPFNENVIWATGLNAVFAATLDGQIVPVDGVGTSDNLTLPGPTACAFGRTEKDKSILYVTGNLLTVPESLLDVKLGGW.

The N-terminal stretch at 1–20 is a signal peptide; sequence MRYHLSALVLVFTAFRETLT. N-linked (GlcNAc...) asparagine glycosylation is found at asparagine 26, asparagine 41, asparagine 47, asparagine 135, asparagine 211, and asparagine 310.

Belongs to the eupF Diels-Alderase family.

Its pathway is secondary metabolite biosynthesis; terpenoid biosynthesis. In terms of biological role, putative hetero-Diels-Alderase; part of the gene cluster that mediates the biosynthesis of eupenifeldin, a bistropolone meroterpenoid that acts as an antitumor agent. The first step of eupenifeldin biosynthesis is the biosynthesis of 3-methylorcinaldehyde performed by the non-reducing polyketide synthase eupA. Oxidative dearomatization of 3-methylorcinaldehyde likely catalyzed by the FAD-dependent monooxygenase eupB is followed by oxidative ring expansion by the 2-oxoglutarate-dependent dioxygenase eupC to provide the first tropolone metabolite, tropolone stipitaldehyde. In parallel, generation of sesquiterpene alpha-humulene from farnesylpyrophosphate (FPP) is catalyzed by the terpene cyclase eupE. The cytochrome P450 monooxygenase eupD then hydroxylates humulene to humulenol. The putative Diels-Alderase eupF probably catalyzes the formation of the tropolone-humulene skeleton by linking humulenol and the polyketide moiety. The short-chain dehydrogenase/reductase eupG and the flavin-dependent monooxygenase eupH are also essential for eupenifeldin biosynthesis and are likely the additional decorating enzymes of the tropolone-humulene skeleton to produce final eupenifeldin or derivatives. This Phoma sp protein is Putative hetero-Diels-Alderase.